The following is a 571-amino-acid chain: Isocitrate dehydrogenase kinase/phosphatase (571 aa).

ATP-binding positions include 318–324 (APGVRGM) and lysine 339. Residue aspartate 374 is part of the active site.

Belongs to the AceK family.

The protein resides in the cytoplasm. The enzyme catalyses L-seryl-[isocitrate dehydrogenase] + ATP = O-phospho-L-seryl-[isocitrate dehydrogenase] + ADP + H(+). Its function is as follows. Bifunctional enzyme which can phosphorylate or dephosphorylate isocitrate dehydrogenase (IDH) on a specific serine residue. This is a regulatory mechanism which enables bacteria to bypass the Krebs cycle via the glyoxylate shunt in response to the source of carbon. When bacteria are grown on glucose, IDH is fully active and unphosphorylated, but when grown on acetate or ethanol, the activity of IDH declines drastically concomitant with its phosphorylation. This Pseudomonas entomophila (strain L48) protein is Isocitrate dehydrogenase kinase/phosphatase.